A 1007-amino-acid chain; its full sequence is MATRPASRQRRASSAAAAVAVVRSSPQPQQQQQQQLPIPQSGSPTSTTTTTTSSSRLTPELSLDGPASPLFAGLDEDPAPKENVTVTVRFRPLSPREIRQGEEVAWYADGDTVVRSEQNPSVAYAYDRVFAPTTTTRQVYDVAAQHVVSGAMEGVNGTIFAYGVTSSGKTHTMHGDQRSPGIIPLAVKDAFSIIQETPNREFLLRVSYLEIYNEVVNDLLNPAGQNLRIREDPQGTFVEGIKEEVVLSPAHALSLIAAGEEHRHVGSTNFNLLSSRSHTIFTLTVESSPCGESNEGEAVTFSQLNLIDLAGSESSRAETTGVRRKEGSYINKSLLTLGTVISKLTDGKATHIPFRDSKLTRLLQSSLSGQGRVSLICTVTPASSNSEETHNTLKFAHRAKRIEVQASQNKIIDEKSLIKKYQNEIRRLKEELEQLKMGIITGTPVKDAGEDNIILWKQKLEDGNVKLQSRLEQEEEAKAALLARIQRLTKLILVSTKATQTSRFSPHPGPRRRHSFGEEELAYLPYKRRDIVLDNESNELLSPVEGLGMTLEDSKEEKKNRKGILNWFKLRKREGGASILTSSEGDKSSLTKSTAPSTPIGESVNFPSEPRISNSLVGESASVDLFSIGHGEFATDSLHGEETPLASRKTIDHVDLLREQLKILSGEVALHTSVLKRLTEEAGRSPNNEKIQMEMKKVNDEIKGKKHQIASLERQIPHSISNNQGMADKLELTPSYAELLEQLNEKSFDLEVKAADNRVIQDQLNEKTTECMELQEEVAHLKEQLYQTLQAKDSLSNSIMMQKNAGINHETDNHADQELSVPREVPGETSPKEPQSVEIDELKQKVCELIEVKAQLETRNQKLLEESTYAKGLASAAGVELKALSEEVTKLMNQNEKLASELASVRSPTPRRANSGLRGTRRDSISRRHEPAPRRDNNAGYEREKALEAVLMEKEQKEAELQRRIEESKQKEAFLESELANMWVLVAKLKKSQGHDLEDFDTKYIGS.

The N-terminal 53 residues, 1–53 (MATRPASRQRRASSAAAAVAVVRSSPQPQQQQQQQLPIPQSGSPTSTTTTTTS), are a transit peptide targeting the chloroplast. Over residues 1 to 55 (MATRPASRQRRASSAAAAVAVVRSSPQPQQQQQQQLPIPQSGSPTSTTTTTTSSS) the composition is skewed to low complexity. Residues 1 to 79 (MATRPASRQR…LFAGLDEDPA (79 aa)) are disordered. The region spanning 83 to 402 (NVTVTVRFRP…LKFAHRAKRI (320 aa)) is the Kinesin motor domain. Position 163 to 170 (163 to 170 (GVTSSGKT)) interacts with ATP. Residues 403-495 (EVQASQNKII…QRLTKLILVS (93 aa)) are a coiled coil. The tract at residues 579–607 (ILTSSEGDKSSLTKSTAPSTPIGESVNFP) is disordered. Coiled coils occupy residues 687–716 (NNEKIQMEMKKVNDEIKGKKHQIASLERQI), 754–791 (AADNRVIQDQLNEKTTECMELQEEVAHLKEQLYQTLQA), and 836–907 (SVEI…SVRS). The tract at residues 901-941 (ELASVRSPTPRRANSGLRGTRRDSISRRHEPAPRRDNNAGY) is disordered. Positions 920–941 (TRRDSISRRHEPAPRRDNNAGY) are enriched in basic and acidic residues. The stretch at 942 to 982 (EREKALEAVLMEKEQKEAELQRRIEESKQKEAFLESELANM) forms a coiled coil.

Belongs to the TRAFAC class myosin-kinesin ATPase superfamily. Kinesin family. KIN-7 subfamily. Binds microtubules. Homodimer. The cofactor is Mg(2+).

It is found in the plastid. It localises to the chloroplast. Probable minus end-directed motor protein with a microtubule-enhanced ATPase activity. Binds ATP/ADP in vitro. Retains total enzymatic activity even after the removal of the ADP bound in the active site. The protein is Kinesin-like protein KIN-7D, chloroplastic of Oryza sativa subsp. japonica (Rice).